Reading from the N-terminus, the 133-residue chain is UPF0292 protein TGAM_1777 (133 aa).

In terms of domain architecture, Toprim spans 20–100 (EGALIVEGLR…RVDVETRREL (81 aa)). Residues Glu26, Asp69, and Asp71 each coordinate Mg(2+).

It belongs to the UPF0292 family. Requires Mg(2+) as cofactor.

This is UPF0292 protein TGAM_1777 from Thermococcus gammatolerans (strain DSM 15229 / JCM 11827 / EJ3).